The following is a 72-amino-acid chain: Translation initiation factor IF-1 (72 aa).

The region spanning methionine 1 to lysine 72 is the S1-like domain.

The protein belongs to the IF-1 family. Component of the 30S ribosomal translation pre-initiation complex which assembles on the 30S ribosome in the order IF-2 and IF-3, IF-1 and N-formylmethionyl-tRNA(fMet); mRNA recruitment can occur at any time during PIC assembly.

Its subcellular location is the cytoplasm. One of the essential components for the initiation of protein synthesis. Stabilizes the binding of IF-2 and IF-3 on the 30S subunit to which N-formylmethionyl-tRNA(fMet) subsequently binds. Helps modulate mRNA selection, yielding the 30S pre-initiation complex (PIC). Upon addition of the 50S ribosomal subunit IF-1, IF-2 and IF-3 are released leaving the mature 70S translation initiation complex. In Francisella tularensis subsp. novicida (strain U112), this protein is Translation initiation factor IF-1.